Consider the following 216-residue polypeptide: Octanoyltransferase (216 aa).

The 187-residue stretch at 30–216 (GEAGEAVWLL…KRQFFEVFGA (187 aa)) folds into the BPL/LPL catalytic domain. Residues 69-76 (RGGQYTYH), 149-151 (AIG), and 162-164 (GLS) contribute to the substrate site. Residue C180 is the Acyl-thioester intermediate of the active site.

This sequence belongs to the LipB family.

It localises to the cytoplasm. The enzyme catalyses octanoyl-[ACP] + L-lysyl-[protein] = N(6)-octanoyl-L-lysyl-[protein] + holo-[ACP] + H(+). It functions in the pathway protein modification; protein lipoylation via endogenous pathway; protein N(6)-(lipoyl)lysine from octanoyl-[acyl-carrier-protein]: step 1/2. Its function is as follows. Catalyzes the transfer of endogenously produced octanoic acid from octanoyl-acyl-carrier-protein onto the lipoyl domains of lipoate-dependent enzymes. Lipoyl-ACP can also act as a substrate although octanoyl-ACP is likely to be the physiological substrate. The chain is Octanoyltransferase from Jannaschia sp. (strain CCS1).